The sequence spans 332 residues: HTH-type transcriptional regulator IdnR (332 aa).

In terms of domain architecture, HTH lacI-type spans 6–60 (ISLQDIATLAGVTKMTVSRYIRSPKKVAKETGERIAKIMEEINYIPNRAPGMLLN). Positions 8–27 (LQDIATLAGVTKMTVSRYIR) form a DNA-binding region, H-T-H motif.

Idn operon regulator. May repress gntKU and gntT genes when growing on L-idonate. This Escherichia coli (strain K12) protein is HTH-type transcriptional regulator IdnR (idnR).